A 495-amino-acid polypeptide reads, in one-letter code: Amorpha-4,11-diene 12-monooxygenase (495 aa).

Residues 1-6 (MKSILK) are Cytoplasmic-facing. A helical; Signal-anchor for type II membrane protein transmembrane segment spans residues 7 to 29 (AMALSLTTSIALATILLFVYKFA). Residues 30–495 (TRSKSTKKSL…KTELLLVPSF (466 aa)) lie on the Lumenal side of the membrane. Residues N176, N261, N267, N386, and N417 are each glycosylated (N-linked (GlcNAc...) asparagine). Residue C439 participates in heme binding.

This sequence belongs to the cytochrome P450 family. Requires heme as cofactor. Highly expressed both in apical and sub-apical cells of glandular secretory trichomes. Detected in flower buds, leaves and roots. Also present in non-glandular trichome cells.

It localises to the endoplasmic reticulum membrane. The enzyme catalyses (+)-amorpha-4,11-diene + 3 reduced [NADPH--hemoprotein reductase] + 3 O2 = (+)-artemisinate + 3 oxidized [NADPH--hemoprotein reductase] + 4 H2O + 4 H(+). Its pathway is sesquiterpene biosynthesis. Functionally, involved in the biosynthesis of the antimalarial endoperoxide artemisinin. Catalyzes three consecutive oxidations of amorpha-4,11-diene to produce artemisinic acid, with artemisinic alcohol and artemisinic aldehyde as intermediates products, but is unable to oxidize germacrene A. No activity with limonene, alpha-pinene, beta-pinene, pinocarveol, (-)-alloisolongifolene, caryophyllene, (-)-alpha-gurjunene, (+)-gamma-gurjunene, (+)-ledene, (+)-beta-selinene and (+)-valencene as substrates. The protein is Amorpha-4,11-diene 12-monooxygenase of Artemisia annua (Sweet wormwood).